The chain runs to 185 residues: Large ribosomal subunit protein uL5 (185 aa).

Belongs to the universal ribosomal protein uL5 family. In terms of assembly, part of the 50S ribosomal subunit; part of the 5S rRNA/L5/L18/L25 subcomplex. Contacts the 5S rRNA and the P site tRNA. Forms a bridge to the 30S subunit in the 70S ribosome.

Its function is as follows. This is one of the proteins that bind and probably mediate the attachment of the 5S RNA into the large ribosomal subunit, where it forms part of the central protuberance. In the 70S ribosome it contacts protein S13 of the 30S subunit (bridge B1b), connecting the 2 subunits; this bridge is implicated in subunit movement. Contacts the P site tRNA; the 5S rRNA and some of its associated proteins might help stabilize positioning of ribosome-bound tRNAs. The polypeptide is Large ribosomal subunit protein uL5 (Bradyrhizobium sp. (strain BTAi1 / ATCC BAA-1182)).